The primary structure comprises 141 residues: MSFASEFKQFIAKGNAMDLAVGVIIGAAFSKIVASIVDDLIMPIVGAVFGGFDFSNLFIALGSVPEGVALTLAEVRKAGVPVLAYGNFVTVLLNFLILALIVFIIVRQINRLKRPAPGAAPAAPPEDIVLLREIRDALRQK.

The next 3 helical transmembrane spans lie at methionine 17–valine 37, leucine 40–alanine 60, and glycine 86–valine 106.

This sequence belongs to the MscL family. As to quaternary structure, homopentamer.

The protein localises to the cell inner membrane. Functionally, channel that opens in response to stretch forces in the membrane lipid bilayer. May participate in the regulation of osmotic pressure changes within the cell. The chain is Large-conductance mechanosensitive channel from Thiobacillus denitrificans (strain ATCC 25259 / T1).